The primary structure comprises 294 residues: Ribosomal protein L11 methyltransferase (294 aa).

Threonine 146, glycine 167, aspartate 189, and asparagine 231 together coordinate S-adenosyl-L-methionine.

Belongs to the methyltransferase superfamily. PrmA family.

The protein localises to the cytoplasm. It carries out the reaction L-lysyl-[protein] + 3 S-adenosyl-L-methionine = N(6),N(6),N(6)-trimethyl-L-lysyl-[protein] + 3 S-adenosyl-L-homocysteine + 3 H(+). In terms of biological role, methylates ribosomal protein L11. This chain is Ribosomal protein L11 methyltransferase, found in Photobacterium profundum (strain SS9).